The sequence spans 131 residues: Holo-[acyl-carrier-protein] synthase (131 aa).

2 residues coordinate Mg(2+): Asp8 and Glu59.

The protein belongs to the P-Pant transferase superfamily. AcpS family. Requires Mg(2+) as cofactor.

Its subcellular location is the cytoplasm. It catalyses the reaction apo-[ACP] + CoA = holo-[ACP] + adenosine 3',5'-bisphosphate + H(+). Its function is as follows. Transfers the 4'-phosphopantetheine moiety from coenzyme A to a Ser of acyl-carrier-protein. This Rickettsia conorii (strain ATCC VR-613 / Malish 7) protein is Holo-[acyl-carrier-protein] synthase.